A 245-amino-acid polypeptide reads, in one-letter code: 2,3-bisphosphoglycerate-dependent phosphoglycerate mutase (245 aa).

Substrate-binding positions include 8–15 (RHGQSLWN), 21–22 (TG), arginine 60, 87–90 (ERHY), lysine 98, 114–115 (RR), and 183–184 (GN). The active-site Tele-phosphohistidine intermediate is histidine 9. Glutamate 87 acts as the Proton donor/acceptor in catalysis.

This sequence belongs to the phosphoglycerate mutase family. BPG-dependent PGAM subfamily.

It carries out the reaction (2R)-2-phosphoglycerate = (2R)-3-phosphoglycerate. It functions in the pathway carbohydrate degradation; glycolysis; pyruvate from D-glyceraldehyde 3-phosphate: step 3/5. Its function is as follows. Catalyzes the interconversion of 2-phosphoglycerate and 3-phosphoglycerate. This is 2,3-bisphosphoglycerate-dependent phosphoglycerate mutase from Bacillus anthracis (strain A0248).